A 380-amino-acid polypeptide reads, in one-letter code: Lipid-A-disaccharide synthase (380 aa).

The protein belongs to the LpxB family.

The catalysed reaction is a lipid X + a UDP-2-N,3-O-bis[(3R)-3-hydroxyacyl]-alpha-D-glucosamine = a lipid A disaccharide + UDP + H(+). It functions in the pathway bacterial outer membrane biogenesis; LPS lipid A biosynthesis. Its function is as follows. Condensation of UDP-2,3-diacylglucosamine and 2,3-diacylglucosamine-1-phosphate to form lipid A disaccharide, a precursor of lipid A, a phosphorylated glycolipid that anchors the lipopolysaccharide to the outer membrane of the cell. The polypeptide is Lipid-A-disaccharide synthase (Pseudomonas syringae pv. syringae (strain B728a)).